We begin with the raw amino-acid sequence, 152 residues long: Ribosomal RNA large subunit methyltransferase H (152 aa).

Residues Leu69, Gly96, and 118–123 (FGKLTF) contribute to the S-adenosyl-L-methionine site.

It belongs to the RNA methyltransferase RlmH family. As to quaternary structure, homodimer.

The protein resides in the cytoplasm. The catalysed reaction is pseudouridine(1915) in 23S rRNA + S-adenosyl-L-methionine = N(3)-methylpseudouridine(1915) in 23S rRNA + S-adenosyl-L-homocysteine + H(+). Functionally, specifically methylates the pseudouridine at position 1915 (m3Psi1915) in 23S rRNA. The sequence is that of Ribosomal RNA large subunit methyltransferase H from Mesomycoplasma hyopneumoniae (strain 7448) (Mycoplasma hyopneumoniae).